The following is a 517-amino-acid chain: DNA-binding protein (517 aa).

Polar residues predominate over residues Met1–Ser10. Positions Met1–Arg110 are disordered. Over residues Val64–Asn80 the composition is skewed to low complexity. Basic residues predominate over residues Pro87–His96. Residue Tyr180 is modified to Phosphotyrosine; by host. Positions 269 and 271 each coordinate Zn(2+). The tract at residues Ile282–Leu316 is flexible loop. Residues Cys324, Cys340, Cys382, Cys384, Cys436, and Cys453 each contribute to the Zn(2+) site. Residues Val501–Phe517 are C-terminal arm, DBP binding.

Belongs to the adenoviridae E2A DNA-binding protein family. As to quaternary structure, homomultimerizes on viral ssDNA bound to pTP. Forms a initiation complex with viral polymerase, pTP and hosts NFIA and POU2F1/OCT1. Interacts with host SRCAP.

It localises to the host nucleus. Its function is as follows. Plays a role in the elongation phase of viral strand displacement replication by unwinding the template in an ATP-independent fashion, employing its capacity to form multimers. Also enhances the rate of initiation. Released from template upon second strand synthesis. Assembles in complex with viral pTP, viral pol, host NFIA and host POU2F1/OCT1 on viral origin of replication. Covers the whole ssDNA genome during synthesis. The complementary strand synthesis induces its relese from DNA template. May inhibit cellular transcription mediated by the interaction between host SRCAP and CBP. This is DNA-binding protein from Human adenovirus B serotype 7 (HAdV-7).